The following is a 128-amino-acid chain: Large ribosomal subunit protein bL20c (128 aa).

This sequence belongs to the bacterial ribosomal protein bL20 family.

It localises to the plastid. The protein localises to the chloroplast. Binds directly to 23S ribosomal RNA and is necessary for the in vitro assembly process of the 50S ribosomal subunit. It is not involved in the protein synthesizing functions of that subunit. The protein is Large ribosomal subunit protein bL20c of Gossypium barbadense (Sea Island cotton).